The following is a 421-amino-acid chain: MDKLIITGGHRLDGEIRISGAKNAALPILAATLLADTPVTVCNLPHLHDITTMIELFGRMGVQPVIDEKLSVEMDASSIKTLVAPYELVKTMRASILVLGPMLARFGEAEVALPGGCAIGSRPVDLHIRGLEALGAQIEMDGGYIKARAPAGGLRGGHFFFDIVSVTGTENIMMAAALASGRTVLENAAREPEVVDLANFLIGMGAQIKGAGTDTVVIEGVKRLGGGRYSVMPDRIETGTYLVAAVATRGRVKLKDTDPTILEAVLLKLEEAGAQIDTGNNWISLDMKGNRPKAVNVRTAPYPAFPTDMQAQFISMNAVAEGTGTVIETVFENRFMHVYEMNRMGARILVEGNTAIVTGVPCLKGAPVMATDLRASASLVIAGLVAEGDTLIDRIYHIDRGYECIEEKLQLLGAKIRRIPG.

22-23 contacts phosphoenolpyruvate; it reads KN. Position 93 (Arg-93) interacts with UDP-N-acetyl-alpha-D-glucosamine. Cys-117 serves as the catalytic Proton donor. 2-(S-cysteinyl)pyruvic acid O-phosphothioketal is present on Cys-117. UDP-N-acetyl-alpha-D-glucosamine-binding positions include 122–126, Asp-308, and Val-330; that span reads RPVDL.

It belongs to the EPSP synthase family. MurA subfamily.

It is found in the cytoplasm. It carries out the reaction phosphoenolpyruvate + UDP-N-acetyl-alpha-D-glucosamine = UDP-N-acetyl-3-O-(1-carboxyvinyl)-alpha-D-glucosamine + phosphate. Its pathway is cell wall biogenesis; peptidoglycan biosynthesis. Functionally, cell wall formation. Adds enolpyruvyl to UDP-N-acetylglucosamine. This chain is UDP-N-acetylglucosamine 1-carboxyvinyltransferase, found in Azotobacter vinelandii (strain DJ / ATCC BAA-1303).